Reading from the N-terminus, the 304-residue chain is Sulfate adenylyltransferase subunit 2 (304 aa).

The protein belongs to the PAPS reductase family. CysD subfamily. As to quaternary structure, heterodimer composed of CysD, the smaller subunit, and CysN.

The catalysed reaction is sulfate + ATP + H(+) = adenosine 5'-phosphosulfate + diphosphate. The protein operates within sulfur metabolism; hydrogen sulfide biosynthesis; sulfite from sulfate: step 1/3. Its function is as follows. With CysN forms the ATP sulfurylase (ATPS) that catalyzes the adenylation of sulfate producing adenosine 5'-phosphosulfate (APS) and diphosphate, the first enzymatic step in sulfur assimilation pathway. APS synthesis involves the formation of a high-energy phosphoric-sulfuric acid anhydride bond driven by GTP hydrolysis by CysN coupled to ATP hydrolysis by CysD. This chain is Sulfate adenylyltransferase subunit 2, found in Acinetobacter baylyi (strain ATCC 33305 / BD413 / ADP1).